We begin with the raw amino-acid sequence, 412 residues long: Putative competence-damage inducible protein (412 aa).

This sequence belongs to the CinA family.

In Bacillus cereus (strain AH187), this protein is Putative competence-damage inducible protein.